A 331-amino-acid polypeptide reads, in one-letter code: Glycerol-3-phosphate dehydrogenase [NAD(P)+] (331 aa).

Positions 11, 12, 32, and 106 each coordinate NADPH. Positions 106, 134, and 136 each coordinate sn-glycerol 3-phosphate. Residue Ala138 coordinates NADPH. 5 residues coordinate sn-glycerol 3-phosphate: Lys189, Asp242, Ser252, Arg253, and Asn254. Lys189 (proton acceptor) is an active-site residue. Arg253 contributes to the NADPH binding site. NADPH is bound by residues Val277 and Glu279.

Belongs to the NAD-dependent glycerol-3-phosphate dehydrogenase family.

It localises to the cytoplasm. It carries out the reaction sn-glycerol 3-phosphate + NAD(+) = dihydroxyacetone phosphate + NADH + H(+). The enzyme catalyses sn-glycerol 3-phosphate + NADP(+) = dihydroxyacetone phosphate + NADPH + H(+). It functions in the pathway membrane lipid metabolism; glycerophospholipid metabolism. Its function is as follows. Catalyzes the reduction of the glycolytic intermediate dihydroxyacetone phosphate (DHAP) to sn-glycerol 3-phosphate (G3P), the key precursor for phospholipid synthesis. This is Glycerol-3-phosphate dehydrogenase [NAD(P)+] from Clostridium perfringens (strain SM101 / Type A).